Reading from the N-terminus, the 400-residue chain is MTERVVLAYSGGLDTSVAIGWIGAETGADVVALAVDVGQGGEDLEAIRQRALTCGAVESIVVDAREEFAESFVAPAIKSNALYMDRYPLISSLSRPVIVRHLVAAAREHGADAIAHGCTGKGNDQVRFEVGVAALAPGLSVLAPVRDSGMTRDKAIAFAEERGLPIDVSKKSPYSIDQNLWGRTAECGVLEDPWAQPPEDVFVYSADPTVARIPDEVTISFIDGVPVGLDGRSLPLADLVAELNVRAGAHGVGRIDLIEDRLVGIKSREIYECPAAITLLTAHRDLEDLTLERDVARFKRGIDQRWGEIVYDGLWYSPLKSALDAFVDSASAGVSGEVRIRLVGGVAQVVGRRSPASLYDHALATYDAGDQFDQRDARGFIELWGLPTKVWAAREQRLNP.

8 to 16 (AYSGGLDTS) contacts ATP. L-citrulline-binding residues include Tyr87 and Ser92. Gly117 serves as a coordination point for ATP. L-aspartate contacts are provided by Thr119, Asn123, and Asp124. Asn123 serves as a coordination point for L-citrulline. Arg127, Ser175, Glu259, and Tyr271 together coordinate L-citrulline.

This sequence belongs to the argininosuccinate synthase family. Type 1 subfamily. As to quaternary structure, homotetramer.

The protein resides in the cytoplasm. It carries out the reaction L-citrulline + L-aspartate + ATP = 2-(N(omega)-L-arginino)succinate + AMP + diphosphate + H(+). It participates in amino-acid biosynthesis; L-arginine biosynthesis; L-arginine from L-ornithine and carbamoyl phosphate: step 2/3. This Frankia casuarinae (strain DSM 45818 / CECT 9043 / HFP020203 / CcI3) protein is Argininosuccinate synthase.